The primary structure comprises 643 residues: Threonine--tRNA ligase 1 (643 aa).

In terms of domain architecture, TGS spans 3-64 (DMVKITFPDG…NEDGTVEIIT (62 aa)). A catalytic region spans residues 245 to 542 (DHRKLGKELK…LIEEHKGALP (298 aa)). Zn(2+) is bound by residues Cys338, His389, and His519.

This sequence belongs to the class-II aminoacyl-tRNA synthetase family. As to quaternary structure, homodimer. Zn(2+) serves as cofactor.

Its subcellular location is the cytoplasm. It catalyses the reaction tRNA(Thr) + L-threonine + ATP = L-threonyl-tRNA(Thr) + AMP + diphosphate + H(+). In terms of biological role, catalyzes the attachment of threonine to tRNA(Thr) in a two-step reaction: L-threonine is first activated by ATP to form Thr-AMP and then transferred to the acceptor end of tRNA(Thr). Also edits incorrectly charged L-seryl-tRNA(Thr). This chain is Threonine--tRNA ligase 1 (thrS), found in Bacillus subtilis (strain 168).